The primary structure comprises 634 residues: Phospholipase B (634 aa).

The signal sequence occupies residues 1–19; the sequence is MSIITTAFALSLLATTAFA. In terms of domain architecture, PLA2c spans 46–569; the sequence is DCPSNVTWIR…DTWCWAGDDN (524 aa). Asparagine 50, asparagine 56, asparagine 122, asparagine 231, asparagine 246, asparagine 269, asparagine 311, asparagine 340, asparagine 384, asparagine 430, asparagine 478, asparagine 498, asparagine 525, asparagine 550, asparagine 569, asparagine 591, and asparagine 603 each carry an N-linked (GlcNAc...) asparagine glycan.

It belongs to the lysophospholipase family. In terms of processing, N-glycosylated.

It localises to the secreted. It carries out the reaction a 1-acyl-sn-glycero-3-phosphocholine + H2O = sn-glycerol 3-phosphocholine + a fatty acid + H(+). In terms of biological role, exhibits phospholipase B (PLB), lysophospholipase (LPL) and lysophospholipase/transacylase (LPTA) activities. This chain is Phospholipase B (PLB1), found in Cryptococcus neoformans var. neoformans serotype D (strain JEC21 / ATCC MYA-565) (Filobasidiella neoformans).